A 376-amino-acid chain; its full sequence is Chaperone protein DnaJ (376 aa).

Positions 4 to 70 constitute a J domain; sequence DYYQILGVSK…QKRAAYDRFG (67 aa). The CR-type zinc-finger motif lies at 139-217; that stretch reads GVEKNISFSS…CHGLGRYHKQ (79 aa). Residues Cys-152, Cys-155, Cys-169, Cys-172, Cys-191, Cys-194, Cys-205, and Cys-208 each coordinate Zn(2+). CXXCXGXG motif repeat units follow at residues 152–159, 169–176, 191–198, and 205–212; these read CDTCHGSG, CDACGGVG, CHKCQGNG, and CKKCHGLG.

It belongs to the DnaJ family. Homodimer. The cofactor is Zn(2+).

It is found in the cytoplasm. Participates actively in the response to hyperosmotic and heat shock by preventing the aggregation of stress-denatured proteins and by disaggregating proteins, also in an autonomous, DnaK-independent fashion. Unfolded proteins bind initially to DnaJ; upon interaction with the DnaJ-bound protein, DnaK hydrolyzes its bound ATP, resulting in the formation of a stable complex. GrpE releases ADP from DnaK; ATP binding to DnaK triggers the release of the substrate protein, thus completing the reaction cycle. Several rounds of ATP-dependent interactions between DnaJ, DnaK and GrpE are required for fully efficient folding. Also involved, together with DnaK and GrpE, in the DNA replication of plasmids through activation of initiation proteins. This is Chaperone protein DnaJ from Rickettsia bellii (strain RML369-C).